Here is a 329-residue protein sequence, read N- to C-terminus: GTP 3',8-cyclase (329 aa).

Residues 1 to 229 enclose the Radical SAM core domain; the sequence is MNPVDYLRIS…ESTIKGNGPA (229 aa). Arginine 8 serves as a coordination point for GTP. Cysteine 15 and cysteine 19 together coordinate [4Fe-4S] cluster. Tyrosine 21 is a binding site for S-adenosyl-L-methionine. Position 22 (cysteine 22) interacts with [4Fe-4S] cluster. Residue arginine 60 coordinates GTP. Glycine 64 provides a ligand contact to S-adenosyl-L-methionine. Position 91 (threonine 91) interacts with GTP. Serine 115 lines the S-adenosyl-L-methionine pocket. Residue lysine 155 coordinates GTP. Position 189 (methionine 189) interacts with S-adenosyl-L-methionine. Residues cysteine 252 and cysteine 255 each contribute to the [4Fe-4S] cluster site. Residue 257–259 participates in GTP binding; that stretch reads RMR. Cysteine 269 provides a ligand contact to [4Fe-4S] cluster.

The protein belongs to the radical SAM superfamily. MoaA family. In terms of assembly, monomer and homodimer. It depends on [4Fe-4S] cluster as a cofactor.

It carries out the reaction GTP + AH2 + S-adenosyl-L-methionine = (8S)-3',8-cyclo-7,8-dihydroguanosine 5'-triphosphate + 5'-deoxyadenosine + L-methionine + A + H(+). It functions in the pathway cofactor biosynthesis; molybdopterin biosynthesis. Functionally, catalyzes the cyclization of GTP to (8S)-3',8-cyclo-7,8-dihydroguanosine 5'-triphosphate. The chain is GTP 3',8-cyclase from Rippkaea orientalis (strain PCC 8801 / RF-1) (Cyanothece sp. (strain PCC 8801)).